The chain runs to 452 residues: Probable glycine dehydrogenase (decarboxylating) subunit 1 (452 aa).

This sequence belongs to the GcvP family. N-terminal subunit subfamily. In terms of assembly, the glycine cleavage system is composed of four proteins: P, T, L and H. In this organism, the P 'protein' is a heterodimer of two subunits.

It carries out the reaction N(6)-[(R)-lipoyl]-L-lysyl-[glycine-cleavage complex H protein] + glycine + H(+) = N(6)-[(R)-S(8)-aminomethyldihydrolipoyl]-L-lysyl-[glycine-cleavage complex H protein] + CO2. Its function is as follows. The glycine cleavage system catalyzes the degradation of glycine. The P protein binds the alpha-amino group of glycine through its pyridoxal phosphate cofactor; CO(2) is released and the remaining methylamine moiety is then transferred to the lipoamide cofactor of the H protein. In Alcanivorax borkumensis (strain ATCC 700651 / DSM 11573 / NCIMB 13689 / SK2), this protein is Probable glycine dehydrogenase (decarboxylating) subunit 1.